The sequence spans 226 residues: MALSDADVQKQIKHMMAFIEQEANEKAEEIDAKAEEEFNIEKGRLVQQQRLKIMEYYEKKEKQVELQKKIQSSNMLNQARLKVLKVREDHVRNVLDEARKRLAEVPKDIKLYSDLLVTLIVQALFQLVEPTVTLRVRQADKALVESLLGRAQQDYKAKIKKDVVLKIDNENFLPPDTCGGIELIAAKGRIKISNTLESRLELIAQQLLPEIRNALFGRNPNRKFTD.

It belongs to the V-ATPase E subunit family. V-ATPase is a heteromultimeric enzyme made up of two complexes: the ATP-hydrolytic V1 complex and the proton translocation V0 complex. The V1 complex consists of three catalytic AB heterodimers that form a heterohexamer, three peripheral stalks each consisting of EG heterodimers, one central rotor including subunits D and F, and the regulatory subunits C and H. The proton translocation complex V0 consists of the proton transport subunit a, a ring of proteolipid subunits c9c'', rotary subunit d, subunits e and f, and the accessory subunits VhaAC45 and ATP6AP2.

Subunit of the V1 complex of vacuolar(H+)-ATPase (V-ATPase), a multisubunit enzyme composed of a peripheral complex (V1) that hydrolyzes ATP and a membrane integral complex (V0) that translocates protons. V-ATPase is responsible for acidifying and maintaining the pH of intracellular compartments and in some cell types, is targeted to the plasma membrane, where it is responsible for acidifying the extracellular environment. This is V-type proton ATPase subunit E (VHA26) from Manduca sexta (Tobacco hawkmoth).